Consider the following 35-residue polypeptide: Photosystem II reaction center protein Psb30 (35 aa).

Residues 7 to 27 (LIANFAALALITLAGPAVIFI) traverse the membrane as a helical segment.

This sequence belongs to the Psb30/Ycf12 family. In terms of assembly, PSII is composed of 1 copy each of membrane proteins PsbA, PsbB, PsbC, PsbD, PsbE, PsbF, PsbH, PsbI, PsbJ, PsbK, PsbL, PsbM, PsbT, PsbX, PsbY, PsbZ, Psb30/Ycf12, peripheral proteins of the oxygen-evolving complex and a large number of cofactors. It forms dimeric complexes.

The protein resides in the plastid. It is found in the organellar chromatophore thylakoid membrane. Its function is as follows. A core subunit of photosystem II (PSII), probably helps stabilize the reaction center. The polypeptide is Photosystem II reaction center protein Psb30 (Paulinella chromatophora).